Here is a 185-residue protein sequence, read N- to C-terminus: uncharacterized protein (185 aa).

Over 1–69 (MSSFIDSIKS…SSDCSRAERT (69 aa)) the chain is Cytoplasmic. The chain crosses the membrane as a helical span at residues 70–90 (FNLILFAIVDLVICCESMAFF). Residue asparagine 91 is a topological domain, extracellular. Residues 92-112 (LLLKLPSMLLVSFLTMLVFSI) form a helical membrane-spanning segment. Over 113 to 118 (SYSWSA) the chain is Cytoplasmic. A helical transmembrane segment spans residues 119 to 139 (FNWISFAFSSASFLMKACILF). The Extracellular segment spans residues 140-185 (NSSFTWFGVKAVIAEDMLYRMVRGLFCASFVKQLQTTFLATAIVLC).

The protein localises to the membrane. This is an uncharacterized protein from Saccharomyces cerevisiae (strain ATCC 204508 / S288c) (Baker's yeast).